The primary structure comprises 77 residues: UPF0270 protein Spro_4577 (77 aa).

It belongs to the UPF0270 family.

The protein is UPF0270 protein Spro_4577 of Serratia proteamaculans (strain 568).